Consider the following 135-residue polypeptide: UPF0355 protein SACOL0457 (135 aa).

This sequence belongs to the UPF0355 family.

In Staphylococcus aureus (strain COL), this protein is UPF0355 protein SACOL0457.